We begin with the raw amino-acid sequence, 440 residues long: Cytochrome c biogenesis protein Ccs1 (440 aa).

3 consecutive transmembrane segments (helical) span residues 25-45, 84-104, and 170-190; these read LQFSIILLLLIAIFSTIGTVI, TWWFLSLLFIFSLSLFTCSIS, and LAPIFVHGSIILLLTGSVLGL.

Belongs to the Ccs1/CcsB family. In terms of assembly, may interact with CcsA.

The protein localises to the plastid. It localises to the chloroplast thylakoid membrane. Required during biogenesis of c-type cytochromes (cytochrome c6 and cytochrome f) at the step of heme attachment. The chain is Cytochrome c biogenesis protein Ccs1 from Pyropia yezoensis (Susabi-nori).